The following is a 476-amino-acid chain: MSDTPKPPSNTLSLKRETATEAPKLEERLHKVLAQAGLGSRRALEQRISNGLIKVNGDIAQLGMSVKSGDKIELDGRSFVASALTEPARVLIYNKPEGEVTTREDPEGRPTVFETLPVLKGARWIAIGRLDINTTGLLLLTTDGELANAMMHPSSEIEREYVVRVRSPEGEEHVQDELLEQLTRGVMLEDGTAKFDTIERIGNTDSHDWFRVVVKEGRNREVRRLWESQGCQVSRLKRTRYGSVLLPRELLRGQSTELPKTQVEALRTQLKLEKDMPLALTLQPIIGQRRSAKATLHVNRNDNNKHAYHNNHSTADESRELRRFDTLRDDRGRGQGKHHFKDRLTVSGEAAAKQAHKPFKQYKPKNDRSLSEGSPATFQSWYVPEGVSTGPRNHRNAGAGNGAHPNKKSPNPNTRNTPGQQTRKSPYKYPNNAPNFPSDHATPTFNPYGNPGQKTGAGRPNNSGGKYNRNRGPRYP.

An S4 RNA-binding domain is found at 27–96; the sequence is ERLHKVLAQA…PARVLIYNKP (70 aa). The active-site Nucleophile is the aspartate 131. A disordered region spans residues 299 to 476; it reads NRNDNNKHAY…YNRNRGPRYP (178 aa). Over residues 314 to 333 the composition is skewed to basic and acidic residues; the sequence is TADESRELRRFDTLRDDRGR. Basic residues predominate over residues 354–363; it reads QAHKPFKQYK. Composition is skewed to polar residues over residues 371 to 380 and 408 to 424; these read SEGSPATFQS and KSPN…QTRK.

This sequence belongs to the pseudouridine synthase RsuA family.

It carries out the reaction uridine(2605) in 23S rRNA = pseudouridine(2605) in 23S rRNA. Functionally, responsible for synthesis of pseudouridine from uracil-2605 in 23S ribosomal RNA. This is Ribosomal large subunit pseudouridine synthase B (rluB) from Xylella fastidiosa (strain 9a5c).